The primary structure comprises 157 residues: Small ribosomal subunit protein uS7 (157 aa).

It belongs to the universal ribosomal protein uS7 family. Part of the 30S ribosomal subunit. Contacts proteins S9 and S11.

One of the primary rRNA binding proteins, it binds directly to 16S rRNA where it nucleates assembly of the head domain of the 30S subunit. Is located at the subunit interface close to the decoding center, probably blocks exit of the E-site tRNA. This Paracidovorax citrulli (strain AAC00-1) (Acidovorax citrulli) protein is Small ribosomal subunit protein uS7.